The sequence spans 91 residues: Small ribosomal subunit protein uS15 (91 aa).

Belongs to the universal ribosomal protein uS15 family. In terms of assembly, part of the 30S ribosomal subunit. Forms a bridge to the 50S subunit in the 70S ribosome, contacting the 23S rRNA.

One of the primary rRNA binding proteins, it binds directly to 16S rRNA where it helps nucleate assembly of the platform of the 30S subunit by binding and bridging several RNA helices of the 16S rRNA. In terms of biological role, forms an intersubunit bridge (bridge B4) with the 23S rRNA of the 50S subunit in the ribosome. The protein is Small ribosomal subunit protein uS15 of Rickettsia canadensis (strain McKiel).